Reading from the N-terminus, the 382-residue chain is Lipid-A-disaccharide synthase (382 aa).

It belongs to the LpxB family.

It catalyses the reaction 2-N,3-O-bis[(3R)-3-hydroxytetradecanoyl]-alpha-D-glucosaminyl 1-phosphate + UDP-2-N,3-O-bis[(3R)-3-hydroxytetradecanoyl]-alpha-D-glucosamine = lipid A disaccharide (E. coli) + UDP + H(+). It carries out the reaction a lipid X + a UDP-2-N,3-O-bis[(3R)-3-hydroxyacyl]-alpha-D-glucosamine = a lipid A disaccharide + UDP + H(+). The protein operates within glycolipid biosynthesis; lipid IV(A) biosynthesis; lipid IV(A) from (3R)-3-hydroxytetradecanoyl-[acyl-carrier-protein] and UDP-N-acetyl-alpha-D-glucosamine: step 5/6. Functionally, condensation of UDP-2,3-diacylglucosamine and 2,3-diacylglucosamine-1-phosphate to form lipid A disaccharide, a precursor of lipid A, a phosphorylated glycolipid that anchors the lipopolysaccharide to the outer membrane of the cell. The chain is Lipid-A-disaccharide synthase from Escherichia coli O17:K52:H18 (strain UMN026 / ExPEC).